The chain runs to 342 residues: tRNA N6-adenosine threonylcarbamoyltransferase (342 aa).

2 residues coordinate Fe cation: histidine 111 and histidine 115. Substrate-binding positions include 134–138 (LVSGG), aspartate 167, glycine 180, and asparagine 276. Aspartate 304 serves as a coordination point for Fe cation.

The protein belongs to the KAE1 / TsaD family. Fe(2+) is required as a cofactor.

It is found in the cytoplasm. The catalysed reaction is L-threonylcarbamoyladenylate + adenosine(37) in tRNA = N(6)-L-threonylcarbamoyladenosine(37) in tRNA + AMP + H(+). In terms of biological role, required for the formation of a threonylcarbamoyl group on adenosine at position 37 (t(6)A37) in tRNAs that read codons beginning with adenine. Is involved in the transfer of the threonylcarbamoyl moiety of threonylcarbamoyl-AMP (TC-AMP) to the N6 group of A37, together with TsaE and TsaB. TsaD likely plays a direct catalytic role in this reaction. In Helicobacter acinonychis (strain Sheeba), this protein is tRNA N6-adenosine threonylcarbamoyltransferase.